We begin with the raw amino-acid sequence, 358 residues long: Alanine racemase (358 aa).

Catalysis depends on Lys34, which acts as the Proton acceptor; specific for D-alanine. Residue Lys34 is modified to N6-(pyridoxal phosphate)lysine. Arg129 provides a ligand contact to substrate. Catalysis depends on Tyr254, which acts as the Proton acceptor; specific for L-alanine. Residue Met302 participates in substrate binding.

This sequence belongs to the alanine racemase family. The cofactor is pyridoxal 5'-phosphate.

It carries out the reaction L-alanine = D-alanine. Its pathway is amino-acid biosynthesis; D-alanine biosynthesis; D-alanine from L-alanine: step 1/1. Functionally, catalyzes the interconversion of L-alanine and D-alanine. May also act on other amino acids. The polypeptide is Alanine racemase (alr) (Aliivibrio salmonicida (strain LFI1238) (Vibrio salmonicida (strain LFI1238))).